Consider the following 243-residue polypeptide: Uridylate kinase (243 aa).

Residue 12 to 15 participates in ATP binding; the sequence is KLSG. Residue glycine 54 coordinates UMP. ATP contacts are provided by glycine 55 and arginine 59. 135-142 is a UMP binding site; that stretch reads TGNPYFTT. Residues asparagine 163, tyrosine 169, and aspartate 172 each coordinate ATP.

It belongs to the UMP kinase family. As to quaternary structure, homohexamer.

It localises to the cytoplasm. It catalyses the reaction UMP + ATP = UDP + ADP. It functions in the pathway pyrimidine metabolism; CTP biosynthesis via de novo pathway; UDP from UMP (UMPK route): step 1/1. Inhibited by UTP. Catalyzes the reversible phosphorylation of UMP to UDP. This Roseiflexus sp. (strain RS-1) protein is Uridylate kinase.